The primary structure comprises 137 residues: MLSGRLVPGLVSMAGRVCLCQGSAGSGAVGPVEAAIRTKLEQALSPEVLELRNESGGHAVPPGSETHFRVAVVSSRFEGLSPLQRHRLIHAALAEELAGPVHALAIQARTPAQWGENSQLDTSPPCLGGNKKTLGTP.

A Phosphoserine modification is found at S81. The interval 114 to 137 is disordered; the sequence is WGENSQLDTSPPCLGGNKKTLGTP.

Belongs to the BolA/IbaG family. Interacts with GLRX5.

The protein resides in the mitochondrion. Its function is as follows. Acts as a mitochondrial iron-sulfur (Fe-S) cluster assembly factor that facilitates (Fe-S) cluster insertion into a subset of mitochondrial proteins. Probably acts together with the monothiol glutaredoxin GLRX5. May protect cells against oxidative stress. The polypeptide is BolA-like protein 1 (BOLA1) (Pongo abelii (Sumatran orangutan)).